Here is a 337-residue protein sequence, read N- to C-terminus: Ketol-acid reductoisomerase (NADP(+)) (337 aa).

The KARI N-terminal Rossmann domain maps to A2 to T182. NADP(+) contacts are provided by residues Y25–Q28, S51, S53, and D83–Q86. H108 is a catalytic residue. G134 is a binding site for NADP(+). The KARI C-terminal knotted domain maps to T183–I328. The Mg(2+) site is built by D191, E195, E227, and E231. S252 lines the substrate pocket.

Belongs to the ketol-acid reductoisomerase family. The cofactor is Mg(2+).

It carries out the reaction (2R)-2,3-dihydroxy-3-methylbutanoate + NADP(+) = (2S)-2-acetolactate + NADPH + H(+). It catalyses the reaction (2R,3R)-2,3-dihydroxy-3-methylpentanoate + NADP(+) = (S)-2-ethyl-2-hydroxy-3-oxobutanoate + NADPH + H(+). The protein operates within amino-acid biosynthesis; L-isoleucine biosynthesis; L-isoleucine from 2-oxobutanoate: step 2/4. Its pathway is amino-acid biosynthesis; L-valine biosynthesis; L-valine from pyruvate: step 2/4. Involved in the biosynthesis of branched-chain amino acids (BCAA). Catalyzes an alkyl-migration followed by a ketol-acid reduction of (S)-2-acetolactate (S2AL) to yield (R)-2,3-dihydroxy-isovalerate. In the isomerase reaction, S2AL is rearranged via a Mg-dependent methyl migration to produce 3-hydroxy-3-methyl-2-ketobutyrate (HMKB). In the reductase reaction, this 2-ketoacid undergoes a metal-dependent reduction by NADPH to yield (R)-2,3-dihydroxy-isovalerate. This is Ketol-acid reductoisomerase (NADP(+)) from Sorangium cellulosum (strain So ce56) (Polyangium cellulosum (strain So ce56)).